A 471-amino-acid polypeptide reads, in one-letter code: Glutamate--tRNA ligase (471 aa).

The 'HIGH' region motif lies at 9–19 (PSPTGYLHVGG). Residues C98, C100, C125, and D127 each contribute to the Zn(2+) site. The 'KMSKS' region motif lies at 237–241 (KLSKR). An ATP-binding site is contributed by K240.

Belongs to the class-I aminoacyl-tRNA synthetase family. Glutamate--tRNA ligase type 1 subfamily. In terms of assembly, monomer. Requires Zn(2+) as cofactor.

The protein resides in the cytoplasm. It catalyses the reaction tRNA(Glu) + L-glutamate + ATP = L-glutamyl-tRNA(Glu) + AMP + diphosphate. Functionally, catalyzes the attachment of glutamate to tRNA(Glu) in a two-step reaction: glutamate is first activated by ATP to form Glu-AMP and then transferred to the acceptor end of tRNA(Glu). In Yersinia pseudotuberculosis serotype O:1b (strain IP 31758), this protein is Glutamate--tRNA ligase.